Reading from the N-terminus, the 590-residue chain is Ras-specific guanine nucleotide-releasing factor RalGPS2 (590 aa).

The Ras-GEF domain occupies T49–G287. A disordered region spans residues A288–A319. Phosphoserine occurs at positions 293, 296, and 308. The PXXP signature appears at P331 to P334. Phosphothreonine is present on T333. Residues S336 and S350 each carry the phosphoserine modification. At T368 the chain carries Phosphothreonine. A disordered region spans residues D380–S413. S381 carries the phosphoserine modification. The segment covering E394 to S410 has biased composition (low complexity). S429 carries the post-translational modification Phosphoserine. In terms of domain architecture, PH spans A464–Q576. Residues T466–E590 form a required for stimulation of nucleotide exchange by RALA region.

In terms of assembly, interacts with RALA. Interacts with the SH3 domains of GRB2 and PLCG1. In terms of tissue distribution, abundant in brain and testis.

It localises to the cytoplasm. The protein resides in the cell membrane. Guanine nucleotide exchange factor for the small GTPase RALA. May be involved in cytoskeletal organization. May also be involved in the stimulation of transcription in a Ras-independent fashion. The sequence is that of Ras-specific guanine nucleotide-releasing factor RalGPS2 (Ralgps2) from Mus musculus (Mouse).